The following is a 172-amino-acid chain: Protein 3 (172 aa).

This Northern cereal mosaic virus (NCMV) protein is Protein 3 (3).